The primary structure comprises 488 residues: Rhamnulokinase (488 aa).

13–17 (ASSGR) lines the ATP pocket. A disulfide bridge connects residues cysteine 68 and cysteine 222. Residues glycine 83 and 236-238 (HDT) each bind substrate. Aspartate 237 functions as the Proton acceptor in the catalytic mechanism. Threonine 259 lines the ATP pocket. Position 296 (asparagine 296) interacts with substrate. Residue glutamine 304 participates in ATP binding. The cysteines at positions 353 and 370 are disulfide-linked. Position 402 (glycine 402) interacts with ATP. Cysteines 413 and 417 form a disulfide.

The protein belongs to the rhamnulokinase family. Mg(2+) is required as a cofactor.

The catalysed reaction is L-rhamnulose + ATP = L-rhamnulose 1-phosphate + ADP + H(+). It functions in the pathway carbohydrate degradation; L-rhamnose degradation; glycerone phosphate from L-rhamnose: step 2/3. Its function is as follows. Involved in the catabolism of L-rhamnose (6-deoxy-L-mannose). Catalyzes the transfer of the gamma-phosphate group from ATP to the 1-hydroxyl group of L-rhamnulose to yield L-rhamnulose 1-phosphate. In Klebsiella pneumoniae subsp. pneumoniae (strain ATCC 700721 / MGH 78578), this protein is Rhamnulokinase.